A 344-amino-acid chain; its full sequence is Phosphoribosylformylglycinamidine cyclo-ligase (344 aa).

Belongs to the AIR synthase family.

It is found in the cytoplasm. It carries out the reaction 2-formamido-N(1)-(5-O-phospho-beta-D-ribosyl)acetamidine + ATP = 5-amino-1-(5-phospho-beta-D-ribosyl)imidazole + ADP + phosphate + H(+). It participates in purine metabolism; IMP biosynthesis via de novo pathway; 5-amino-1-(5-phospho-D-ribosyl)imidazole from N(2)-formyl-N(1)-(5-phospho-D-ribosyl)glycinamide: step 2/2. The polypeptide is Phosphoribosylformylglycinamidine cyclo-ligase (Neisseria gonorrhoeae (strain ATCC 700825 / FA 1090)).